A 173-amino-acid chain; its full sequence is Bifunctional protein PyrR (173 aa).

Residues 93 to 105 (VILVDDVLYTGRT) carry the PRPP-binding motif.

It belongs to the purine/pyrimidine phosphoribosyltransferase family. PyrR subfamily. As to quaternary structure, homodimer and homohexamer; in equilibrium.

The enzyme catalyses UMP + diphosphate = 5-phospho-alpha-D-ribose 1-diphosphate + uracil. Its function is as follows. Regulates transcriptional attenuation of the pyrimidine nucleotide (pyr) operon by binding in a uridine-dependent manner to specific sites on pyr mRNA. This disrupts an antiterminator hairpin in the RNA and favors formation of a downstream transcription terminator, leading to a reduced expression of downstream genes. Functionally, also displays a weak uracil phosphoribosyltransferase activity which is not physiologically significant. The sequence is that of Bifunctional protein PyrR from Streptococcus thermophilus (strain ATCC BAA-491 / LMD-9).